The chain runs to 238 residues: Probable transcriptional regulatory protein YeeN (238 aa).

Belongs to the TACO1 family. YeeN subfamily.

Its subcellular location is the cytoplasm. In Salmonella typhi, this protein is Probable transcriptional regulatory protein YeeN.